A 376-amino-acid chain; its full sequence is Chaperone protein DnaJ (376 aa).

A J domain is found at 5–70; it reads DYYEILGVSK…QKRAAYDQYG (66 aa). Residues 131 to 209 form a CR-type zinc finger; that stretch reads GVTKEIRIPT…CHGHGRVERS (79 aa). The Zn(2+) site is built by Cys-144, Cys-147, Cys-161, Cys-164, Cys-183, Cys-186, Cys-197, and Cys-200. CXXCXGXG motif repeat units lie at residues 144 to 151, 161 to 168, 183 to 190, and 197 to 204; these read CDVCHGSG, CPTCHGSG, CPHCQGRG, and CNKCHGHG.

Belongs to the DnaJ family. Homodimer. Zn(2+) serves as cofactor.

Its subcellular location is the cytoplasm. Its function is as follows. Participates actively in the response to hyperosmotic and heat shock by preventing the aggregation of stress-denatured proteins and by disaggregating proteins, also in an autonomous, DnaK-independent fashion. Unfolded proteins bind initially to DnaJ; upon interaction with the DnaJ-bound protein, DnaK hydrolyzes its bound ATP, resulting in the formation of a stable complex. GrpE releases ADP from DnaK; ATP binding to DnaK triggers the release of the substrate protein, thus completing the reaction cycle. Several rounds of ATP-dependent interactions between DnaJ, DnaK and GrpE are required for fully efficient folding. Also involved, together with DnaK and GrpE, in the DNA replication of plasmids through activation of initiation proteins. The chain is Chaperone protein DnaJ from Shigella flexneri serotype 5b (strain 8401).